A 504-amino-acid polypeptide reads, in one-letter code: uncharacterized protein (504 aa).

Disordered stretches follow at residues 1-59 (MSSS…KNEY) and 171-255 (GVNS…NQRL). 2 stretches are compositionally biased toward basic and acidic residues: residues 36–50 (KPID…KEIG) and 199–212 (RAET…ESRQ). Residues 213-232 (SNRGNNDNGDQRMTSKATTR) are compositionally biased toward polar residues.

This is an uncharacterized protein from Caenorhabditis elegans.